The following is a 374-amino-acid chain: N5-carboxyaminoimidazole ribonucleotide synthase (374 aa).

Residues Arg108, Lys148, 153 to 159 (GYDGKGQ), 183 to 186 (EKYL), Glu191, His214, and 266 to 267 (NE) contribute to the ATP site. The ATP-grasp domain occupies 112 to 296 (KETLKSAGTK…QFDTHILAVT (185 aa)).

Belongs to the PurK/PurT family. In terms of assembly, homodimer.

It carries out the reaction 5-amino-1-(5-phospho-beta-D-ribosyl)imidazole + hydrogencarbonate + ATP = 5-carboxyamino-1-(5-phospho-D-ribosyl)imidazole + ADP + phosphate + 2 H(+). The protein operates within purine metabolism; IMP biosynthesis via de novo pathway; 5-amino-1-(5-phospho-D-ribosyl)imidazole-4-carboxylate from 5-amino-1-(5-phospho-D-ribosyl)imidazole (N5-CAIR route): step 1/2. Functionally, catalyzes the ATP-dependent conversion of 5-aminoimidazole ribonucleotide (AIR) and HCO(3)(-) to N5-carboxyaminoimidazole ribonucleotide (N5-CAIR). This Staphylococcus aureus (strain COL) protein is N5-carboxyaminoimidazole ribonucleotide synthase.